Here is a 37-residue protein sequence, read N- to C-terminus: Mau operon transcriptional activator (37 aa).

The protein belongs to the LysR transcriptional regulatory family.

Its function is as follows. Transcriptional activator of the mau genes involved in methylamine metabolism. The chain is Mau operon transcriptional activator (mauR) from Paracoccus versutus (Thiobacillus versutus).